The sequence spans 201 residues: Probable cobalt-precorrin-6B C(15)-methyltransferase (decarboxylating) (201 aa).

Residues threonine 28, 52 to 56, aspartate 76, and alanine 105 contribute to the S-adenosyl-L-methionine site; that span reads GTGTG.

The protein belongs to the methyltransferase superfamily. Archaeal-type CbiT family.

It catalyses the reaction Co-precorrin-6B + S-adenosyl-L-methionine = Co-precorrin-7 + S-adenosyl-L-homocysteine + CO2. It participates in cofactor biosynthesis; adenosylcobalamin biosynthesis; cob(II)yrinate a,c-diamide from sirohydrochlorin (anaerobic route): step 8/10. Its function is as follows. Catalyzes the methylation of C-15 in cobalt-precorrin-6B followed by the decarboxylation of C-12 to form cobalt-precorrin-7. The protein is Probable cobalt-precorrin-6B C(15)-methyltransferase (decarboxylating) of Thermoplasma volcanium (strain ATCC 51530 / DSM 4299 / JCM 9571 / NBRC 15438 / GSS1).